The primary structure comprises 48 residues: Keratin-associated protein 22-1 (48 aa).

As to quaternary structure, interacts with hair keratins.

In terms of biological role, in the hair cortex, hair keratin intermediate filaments are embedded in an interfilamentous matrix, consisting of hair keratin-associated proteins (KRTAP), which are essential for the formation of a rigid and resistant hair shaft through their extensive disulfide bond cross-linking with abundant cysteine residues of hair keratins. The matrix proteins include the high-sulfur and high-glycine-tyrosine keratins. This chain is Keratin-associated protein 22-1 (KRTAP22-1), found in Homo sapiens (Human).